We begin with the raw amino-acid sequence, 175 residues long: Alpha-crystallin B chain (175 aa).

N-acetylmethionine is present on Met-1. Residue Ser-19 is modified to Phosphoserine. Ser-41 is a glycosylation site (O-linked (GlcNAc) serine). Ser-45 and Ser-59 each carry phosphoserine. The sHSP domain maps to 56-164 (RAPSWIDTGL…PERTIPITRE (109 aa)). A Zn(2+)-binding site is contributed by His-83. Lys-92 carries the N6-acetyllysine modification. The Zn(2+) site is built by His-104, Glu-106, His-111, and His-119. Residues 142 to 175 (VLTVNGPRKQASGPERTIPITREEKPAVTAAPKK) are disordered. Lys-166 is subject to N6-acetyllysine. A glycan (O-linked (GlcNAc) threonine) is linked at Thr-170.

Belongs to the small heat shock protein (HSP20) family. In terms of assembly, heteromer composed of three CRYAA and one CRYAB subunits. Aggregates with homologous proteins, including the small heat shock protein HSPB1, to form large heteromeric complexes. Inter-subunit bridging via zinc ions enhances stability, which is crucial as there is no protein turn over in the lens. Interacts with HSPBAP1 and TTN/titin. Interacts with TMEM109; in the cellular response to DNA damage. Interacts with DES; binds rapidly during early stages of DES filament assembly and a reduced binding seen in the later stages. Interacts with ATP6V1A and with MTOR, forming a ternary complex. As to expression, lens as well as other tissues.

The protein resides in the cytoplasm. It localises to the nucleus. Its subcellular location is the secreted. The protein localises to the lysosome. In terms of biological role, may contribute to the transparency and refractive index of the lens. Has chaperone-like activity, preventing aggregation of various proteins under a wide range of stress conditions. In lens epithelial cells, stabilizes the ATP6V1A protein, preventing its degradation by the proteasome. The chain is Alpha-crystallin B chain (CRYAB) from Spalax judaei (Judean Mountains blind mole rat).